The sequence spans 352 residues: Holliday junction branch migration complex subunit RuvB (352 aa).

The tract at residues 5–191 (TDDFSEQRVI…FGIVARLEFY (187 aa)) is large ATPase domain (RuvB-L). Residues leucine 30, arginine 31, glycine 72, lysine 75, threonine 76, threonine 77, 138 to 140 (EDY), arginine 181, tyrosine 191, and arginine 228 contribute to the ATP site. Threonine 76 contacts Mg(2+). The segment at 192–262 (TPLELTRIVT…MADAALVMLD (71 aa)) is small ATPAse domain (RuvB-S). The segment at 265–352 (PVGFDVMDRK…GPNGELWGGQ (88 aa)) is head domain (RuvB-H). Positions 301, 320, and 325 each coordinate DNA.

It belongs to the RuvB family. Homohexamer. Forms an RuvA(8)-RuvB(12)-Holliday junction (HJ) complex. HJ DNA is sandwiched between 2 RuvA tetramers; dsDNA enters through RuvA and exits via RuvB. An RuvB hexamer assembles on each DNA strand where it exits the tetramer. Each RuvB hexamer is contacted by two RuvA subunits (via domain III) on 2 adjacent RuvB subunits; this complex drives branch migration. In the full resolvosome a probable DNA-RuvA(4)-RuvB(12)-RuvC(2) complex forms which resolves the HJ.

It is found in the cytoplasm. The enzyme catalyses ATP + H2O = ADP + phosphate + H(+). Functionally, the RuvA-RuvB-RuvC complex processes Holliday junction (HJ) DNA during genetic recombination and DNA repair, while the RuvA-RuvB complex plays an important role in the rescue of blocked DNA replication forks via replication fork reversal (RFR). RuvA specifically binds to HJ cruciform DNA, conferring on it an open structure. The RuvB hexamer acts as an ATP-dependent pump, pulling dsDNA into and through the RuvAB complex. RuvB forms 2 homohexamers on either side of HJ DNA bound by 1 or 2 RuvA tetramers; 4 subunits per hexamer contact DNA at a time. Coordinated motions by a converter formed by DNA-disengaged RuvB subunits stimulates ATP hydrolysis and nucleotide exchange. Immobilization of the converter enables RuvB to convert the ATP-contained energy into a lever motion, pulling 2 nucleotides of DNA out of the RuvA tetramer per ATP hydrolyzed, thus driving DNA branch migration. The RuvB motors rotate together with the DNA substrate, which together with the progressing nucleotide cycle form the mechanistic basis for DNA recombination by continuous HJ branch migration. Branch migration allows RuvC to scan DNA until it finds its consensus sequence, where it cleaves and resolves cruciform DNA. In Herminiimonas arsenicoxydans, this protein is Holliday junction branch migration complex subunit RuvB.